The sequence spans 74 residues: uncharacterized protein (74 aa).

Disordered regions lie at residues 1-26 (MNGP…SGVF) and 46-74 (ITNS…SFTQ). Residues 34–50 (VSNKSIMLISLKITNSP) form a helical membrane-spanning segment. Residues 47 to 74 (TNSPNSNSRGSSSSSSTSKSSSKTSFTQ) show a composition bias toward low complexity.

The protein localises to the membrane. This is an uncharacterized protein from Dictyostelium discoideum (Social amoeba).